The following is a 392-amino-acid chain: Arogenate dehydratase/prephenate dehydratase 1, chloroplastic (392 aa).

The transit peptide at 1-48 (MALRCFPIWVCPQTTHHRSPLMGLAEFDADKRRRFCLWECSSSASQRA) directs the protein to the chloroplast. One can recognise a Prephenate dehydratase domain in the interval 107-282 (RISFQGIPGA…NVTRFLILAR (176 aa)). Residues 296 to 387 (SIVFSLEEGP…SFIRILGCYP (92 aa)) enclose the ACT domain.

Expressed in roots, leaves, stems, flowers and siliques.

It is found in the plastid. It localises to the chloroplast stroma. It carries out the reaction L-arogenate + H(+) = L-phenylalanine + CO2 + H2O. The enzyme catalyses prephenate + H(+) = 3-phenylpyruvate + CO2 + H2O. It participates in amino-acid biosynthesis; L-phenylalanine biosynthesis; L-phenylalanine from L-arogenate: step 1/1. It functions in the pathway amino-acid biosynthesis; L-phenylalanine biosynthesis; phenylpyruvate from prephenate: step 1/1. Its function is as follows. Converts the prephenate produced from the shikimate-chorismate pathway into phenylalanine. Dehydratase that uses arogenate and prephenate as substrates. Utilzes more efficiently arogenate than prephenate. In Arabidopsis thaliana (Mouse-ear cress), this protein is Arogenate dehydratase/prephenate dehydratase 1, chloroplastic.